A 148-amino-acid chain; its full sequence is MTDLELQQLVATISMHDFHRPFQHRAYFNARLRTTGGRYQLASHDIDINPKMLTDFDEATLIGVIKHELCHYHLHLTKRGYRHRDADFKRLLAQVGGSRYAPAPKQATARPYRYIYECQRCGRRYYRKRRMDTRRYTCGRCQGPIKLV.

Residues 6–147 enclose the SprT-like domain; the sequence is LQQLVATISM…CGRCQGPIKL (142 aa). His67 serves as a coordination point for Zn(2+). The active site involves Glu68. His71 serves as a coordination point for Zn(2+).

This sequence belongs to the SprT family. Zn(2+) serves as cofactor.

The protein resides in the cytoplasm. The protein is Protein SprT-like of Lactiplantibacillus plantarum (strain ATCC BAA-793 / NCIMB 8826 / WCFS1) (Lactobacillus plantarum).